Reading from the N-terminus, the 425-residue chain is 2-methylserine hydroxymethyltransferase (425 aa).

(6S)-5,6,7,8-tetrahydrofolate is bound by residues Leu-126 and 130–132; that span reads GHL. The residue at position 235 (Lys-235) is an N6-(pyridoxal phosphate)lysine. A (6S)-5,6,7,8-tetrahydrofolate-binding site is contributed by Glu-251.

Belongs to the SHMT family. Homodimer. Requires pyridoxal 5'-phosphate as cofactor.

It is found in the cytoplasm. The enzyme catalyses (6R)-5,10-methylene-5,6,7,8-tetrahydrofolate + D-alanine + H2O = 2-methylserine + (6S)-5,6,7,8-tetrahydrofolate. Its pathway is one-carbon metabolism; tetrahydrofolate interconversion. Inhibited by hydroxylamine and sodium borohydride. Functionally, catalyzes the reversible interconversion of alpha-methyl-L-serine to D-alanine with tetrahydrofolate (THF) serving as the one-carbon carrier. Cannot use alpha-methyl-D-serine, L-serine, D-serine or L-alanine. In Paracoccus sp, this protein is 2-methylserine hydroxymethyltransferase.